A 295-amino-acid chain; its full sequence is Large ribosomal subunit protein uL29m (295 aa).

Belongs to the universal ribosomal protein uL29 family. Component of the mitochondrial large ribosomal subunit. Mature mitochondrial ribosomes consist of a small (37S) and a large (54S) subunit. The 37S subunit contains at least 33 different proteins and 1 molecule of RNA (15S). The 54S subunit contains at least 45 different proteins and 1 molecule of RNA (21S).

The protein resides in the mitochondrion. This Meyerozyma guilliermondii (strain ATCC 6260 / CBS 566 / DSM 6381 / JCM 1539 / NBRC 10279 / NRRL Y-324) (Yeast) protein is Large ribosomal subunit protein uL29m (MRPL4).